A 256-amino-acid polypeptide reads, in one-letter code: Homeobox protein TGIF2LX (256 aa).

A disordered region spans residues 1–45; it reads MEAAADSPAETRSRVEKDSRRVEKDSRRPKKDSPAKTQSPAQDTS. A compositionally biased stretch (basic and acidic residues) spans 9 to 34; sequence AETRSRVEKDSRRVEKDSRRPKKDSP. The span at 35–45 shows a compositional bias: polar residues; that stretch reads AKTQSPAQDTS. Residues 62 to 125 constitute a DNA-binding region (homeobox; TALE-type); it reads EHKKKRKGYL…INARRRILPD (64 aa). The segment at 136–224 is disordered; it reads VGHKTGKDAN…SSSPEPVSTE (89 aa). Residues 166–179 are compositionally biased toward polar residues; sequence DNVQSLPLRSSPKG. Residues 209–224 show a composition bias toward low complexity; it reads VSNITSSSSPEPVSTE.

The protein belongs to the TALE/TGIF homeobox family.

Its subcellular location is the nucleus. May have a transcription role in testis. The sequence is that of Homeobox protein TGIF2LX (TGIF2LX) from Papio hamadryas (Hamadryas baboon).